We begin with the raw amino-acid sequence, 98 residues long: Small ribosomal subunit protein uS19 (98 aa).

The tract at residues 77-98 (TRTFRGHAGGKAEKGGSAPRKK) is disordered.

This sequence belongs to the universal ribosomal protein uS19 family.

Its function is as follows. Protein S19 forms a complex with S13 that binds strongly to the 16S ribosomal RNA. This is Small ribosomal subunit protein uS19 from Chlorobium limicola (strain DSM 245 / NBRC 103803 / 6330).